A 294-amino-acid chain; its full sequence is Putative isocitrate dehydrogenase [NAD] subunit-like 4 (294 aa).

This sequence belongs to the isocitrate and isopropylmalate dehydrogenases family.

Functionally, performs an essential role in the oxidative function of the citric acid cycle. The protein is Putative isocitrate dehydrogenase [NAD] subunit-like 4 (IDH4) of Arabidopsis thaliana (Mouse-ear cress).